The following is a 568-amino-acid chain: Oxygen-dependent choline dehydrogenase (568 aa).

Residue 8–37 (DYIIIGAGSAGNTLAARLTEDAGVTVLLLE) participates in FAD binding. H477 functions as the Proton acceptor in the catalytic mechanism.

Belongs to the GMC oxidoreductase family. FAD serves as cofactor.

It carries out the reaction choline + A = betaine aldehyde + AH2. The enzyme catalyses betaine aldehyde + NAD(+) + H2O = glycine betaine + NADH + 2 H(+). The protein operates within amine and polyamine biosynthesis; betaine biosynthesis via choline pathway; betaine aldehyde from choline (cytochrome c reductase route): step 1/1. Functionally, involved in the biosynthesis of the osmoprotectant glycine betaine. Catalyzes the oxidation of choline to betaine aldehyde and betaine aldehyde to glycine betaine at the same rate. The polypeptide is Oxygen-dependent choline dehydrogenase (Pseudomonas syringae pv. tomato (strain ATCC BAA-871 / DC3000)).